Consider the following 291-residue polypeptide: Lys-63-specific deubiquitinase BRCC36-like (291 aa).

The 168-residue stretch at 12 to 179 (VYLESDAFLV…YTCFQSVQAS (168 aa)) folds into the MPN domain. Positions 122, 124, and 135 each coordinate Zn(2+). A JAMM motif motif is present at residues 122 to 135 (HSHPHITVWPSHVD). Residues 259-286 (LQWLEDRLEQNQQRLQELEQEKEDLMEE) adopt a coiled-coil conformation.

It belongs to the peptidase M67A family. BRCC36 subfamily.

In terms of biological role, metalloprotease that specifically cleaves 'Lys-63'-linked polyubiquitin chains. This Mus musculus (Mouse) protein is Lys-63-specific deubiquitinase BRCC36-like.